Reading from the N-terminus, the 525-residue chain is GMP synthase [glutamine-hydrolyzing] (525 aa).

The region spanning 9–207 is the Glutamine amidotransferase type-1 domain; it reads RILILDFGSQ…VLDICRCTPL (199 aa). The active-site Nucleophile is Cys86. Residues His181 and Glu183 contribute to the active site. Positions 208 to 400 constitute a GMPS ATP-PPase domain; sequence WTPAKIIEDA…LGLPYDMLYR (193 aa). Residue 235-241 coordinates ATP; it reads SGGVDSS.

As to quaternary structure, homodimer.

It carries out the reaction XMP + L-glutamine + ATP + H2O = GMP + L-glutamate + AMP + diphosphate + 2 H(+). It functions in the pathway purine metabolism; GMP biosynthesis; GMP from XMP (L-Gln route): step 1/1. In terms of biological role, catalyzes the synthesis of GMP from XMP. The polypeptide is GMP synthase [glutamine-hydrolyzing] (Sodalis glossinidius (strain morsitans)).